Here is a 1117-residue protein sequence, read N- to C-terminus: Leucine-rich repeats and immunoglobulin-like domains protein 3 (1117 aa).

Positions 1 to 24 (MGAPGLRAATAALGLLLCAGLGRA) are cleaved as a signal peptide. One can recognise an LRRNT domain in the interval 38-74 (LLDDDAQRPCPAACHCLGDLLDCSRRRLVRLPDPLPA). LRR repeat units lie at residues 75 to 98 (WVTRLDLSHNRLSFIQTSSLSHLQ), 99 to 120 (SLQEVKLNNNELETIPNLGSIS), 122 to 143 (NIRQLSLAGNAIDKILPEQLEA), 146 to 168 (SLETLDLSNNNISELRTAFPPLQ), 169 to 189 (LKYLYINNNRVSSMEPGYFDN), 193 to 214 (TLLVLKLNRNRISAIPPKMFKL), 216 to 237 (QLQHLELNRNKIKNVDGLTFQG), 240 to 261 (ALKSLKMQRNGVTKLMDGAFWG), 264 to 285 (NMEVLQLDHNNLTEITKGWLYG), 288 to 309 (MLRELHLSQNAINRISPDAWEF), 312 to 333 (KLSELDLTFNHLSRLDDSSFLG), 336 to 357 (LLNALHIGNNKVSYIADCAFRG), 360 to 382 (SLKTLDLRNNEISWTIEDMSGAF), 387 to 408 (RLRQLILQGNRIRSITKKAFAG), and 411 to 432 (TLEHLDLSGNAIMSLQSNAFSQ). A glycan (N-linked (GlcNAc...) asparagine) is linked at Asn-156. The N-linked (GlcNAc...) asparagine glycan is linked to Asn-274. 2 N-linked (GlcNAc...) asparagine glycosylation sites follow: Asn-442 and Asn-469. The LRRCT domain maps to 444–495 (SSLLCDCQLRWLPQWVAENNFQSFVNASCAHPQLLKGRSIFTVSPDGFVCDD). Ig-like C2-type domains lie at 499-598 (PQIT…AKLT), 603-692 (PSFT…ATLT), and 697-783 (PSFL…VRLS). Cystine bridges form between Cys-520/Cys-581 and Cys-624/Cys-676. N-linked (GlcNAc...) asparagine glycans are attached at residues Asn-688 and Asn-729. Cys-718 and Cys-767 form a disulfide bridge. Residues 810 to 830 (VVIIAVVCCVVGTSLVWVVII) traverse the membrane as a helical segment. Residue Asn-1014 is glycosylated (N-linked (GlcNAc...) asparagine). The tract at residues 1019 to 1093 (DFSTGPEPGS…KERTDFREEN (75 aa)) is disordered. Basic and acidic residues predominate over residues 1083–1093 (DKERTDFREEN).

Interacts with EGFR, ERBB2 and ERBB4 (in vitro). As to expression, widely expressed.

The protein resides in the cell membrane. Its subcellular location is the cytoplasmic vesicle membrane. Functionally, plays a role in craniofacial and inner ear morphogenesis during embryonic development. Acts within the otic vesicle epithelium to control formation of the lateral semicircular canal in the inner ear, possibly by restricting the expression of NTN1. The protein is Leucine-rich repeats and immunoglobulin-like domains protein 3 (Lrig3) of Mus musculus (Mouse).